The following is a 328-amino-acid chain: Aspartate carbamoyltransferase catalytic subunit (328 aa).

Positions 64 and 65 each coordinate carbamoyl phosphate. K92 serves as a coordination point for L-aspartate. Carbamoyl phosphate-binding residues include R114, H144, and Q147. Residues R177 and R232 each coordinate L-aspartate. G273 and P274 together coordinate carbamoyl phosphate.

This sequence belongs to the aspartate/ornithine carbamoyltransferase superfamily. ATCase family. Heterododecamer (2C3:3R2) of six catalytic PyrB chains organized as two trimers (C3), and six regulatory PyrI chains organized as three dimers (R2).

It carries out the reaction carbamoyl phosphate + L-aspartate = N-carbamoyl-L-aspartate + phosphate + H(+). It functions in the pathway pyrimidine metabolism; UMP biosynthesis via de novo pathway; (S)-dihydroorotate from bicarbonate: step 2/3. Its function is as follows. Catalyzes the condensation of carbamoyl phosphate and aspartate to form carbamoyl aspartate and inorganic phosphate, the committed step in the de novo pyrimidine nucleotide biosynthesis pathway. This is Aspartate carbamoyltransferase catalytic subunit from Halorhodospira halophila (strain DSM 244 / SL1) (Ectothiorhodospira halophila (strain DSM 244 / SL1)).